Here is a 320-residue protein sequence, read N- to C-terminus: GRAM domain-containing protein 2A (320 aa).

Positions 33 to 56 (TEKPGKVQEPPDDGSLHWSEGSKG) are disordered. Positions 74-141 (QQYHKLFKDI…VSVQLIKKHK (68 aa)) constitute a GRAM domain. The helical transmembrane segment at 278-298 (LLKVIFVMICFLVLSSSYLAF) threads the bilayer.

Phosphorylated.

The protein resides in the endoplasmic reticulum membrane. It localises to the cell membrane. Participates in the organization ofendoplasmic reticulum-plasma membrane contact sites (EPCS) with pleiotropic functions including STIM1 recruitment and calcium homeostasis. Constitutive tether that co-localize with ESYT2/3 tethers at endoplasmic reticulum-plasma membrane contact sites in a phosphatidylinositol lipid-dependent manner. Pre-marks the subset of phosphtidylinositol 4,5-biphosphate (PI(4,5)P2)-enriched EPCS destined for the store operated calcium entry pathway (SOCE). The polypeptide is GRAM domain-containing protein 2A (Mus musculus (Mouse)).